A 637-amino-acid polypeptide reads, in one-letter code: Chaperone protein DnaK (637 aa).

Thr196 carries the phosphothreonine; by autocatalysis modification. A disordered region spans residues 598 to 637 (AEAPGADAPEGQAPQDGGSKKGGEGAVENAEYEVIDGDGK). Positions 627 to 637 (AEYEVIDGDGK) are enriched in acidic residues.

This sequence belongs to the heat shock protein 70 family.

Its function is as follows. Acts as a chaperone. The polypeptide is Chaperone protein DnaK (Chlorobium luteolum (strain DSM 273 / BCRC 81028 / 2530) (Pelodictyon luteolum)).